A 409-amino-acid polypeptide reads, in one-letter code: LIM/homeobox protein ttx-3 (409 aa).

LIM zinc-binding domains are found at residues 108–169 and 171–232; these read NQCC…RYQK and CRKC…VRST. 2 disordered regions span residues 245 to 299 and 372 to 409; these read AVVA…RTSF and MNPP…YTHL. Pro residues predominate over residues 247-267; that stretch reads VAPPPPPPTTTTAPPPAAPEQ. Residues 292-351 constitute a DNA-binding region (homeobox); sequence SKRMRTSFKHHQLRAMKTYFALNHNPDAKDLKQLAAKTNLTKRVLQVWFQNARAKYRREL. Polar residues predominate over residues 382 to 409; it reads GHSTDGYQLNTPPLSSEIYSPNSNYTHL.

As to expression, expressed in the AIA, AIN and AIY interneurons, and in the NSM neurons. Expressed also in ADL and ASI sensory neurons in 60-70% of L2 larvae. Expression is also detected in head muscles of embryos and some early larvae but not late larvae or adults.

It is found in the nucleus. The protein resides in the perikaryon. Its subcellular location is the cell projection. The protein localises to the axon. In terms of biological role, transcription factor. Binds to a sequence motif, 5'-TTATTGGCTTCGTTAA-3', which may be involved in AIY interneuron function, in the regulatory elements of target genes; binding is more efficient, in vitro, together with homeobox protein ceh-10. Required for specification of the AIA and AIY interneurons and the NSM neurons. Positively regulates the expression of a number of genes including ceh-10, ceh-23, kal-1, hen-1, ser-2, unc-17 and sra-11 in AIY neurons, and cat-4, flp-4, bas-1, ptps-1 and mgl-1 in NSM neurons. In concert with WNT/beta-catenin signaling, initiates expression of homeobox ceh-10 in AIY, but not in the sister cells, SMDD motor neurons. Also acts in an autoregulatory feedback loop to maintain its own expression. Plays a role in the thermotactic response, olfactory imprinting, regulation of longevity, control of dauer formation and axon outgrowth and pathfinding. Not required for normal chemosensory behavior. The polypeptide is LIM/homeobox protein ttx-3 (Caenorhabditis elegans).